The chain runs to 392 residues: MSAPQKCAAVVVGAGPAGLAVIGNLLERLPGSKIAWIDPYFQAGRVNRRYREVPSNTKVSLFQAYASAVQPFRTVINTTPTPNAFSTMTKLEQDKGCHLHYAADMCRALTEGILKSDEVYRCCGIVTHADLKENLSQWTVRIKSYESLEEVQVVAPRLILCTGSSPTLLRIPVPALSIQRLDLDVVLKPSELVRAIHTGSPQTVAVVGASHSAILALLNLVDLARSSHPQLRIKWFTRNALRYAEYMDGWILRDNTGLKGVAADFAREQLEDDRLPKSEAGRFIEKIDCSDGKETAAYEAHLPSCSHIVQAVGFTRDPLPELARDGMPLKAEFDHESGGFSDQDGRVIKGLYGAGIAFPERVVDPYNNVEYAVGFFKFMKFIKRVCPRWLAA.

The first 20 residues, 1–20 (MSAPQKCAAVVVGAGPAGLA), serve as a signal peptide directing secretion. An N-linked (GlcNAc...) asparagine glycan is attached at Asn-134.

Functionally, monooxygenase; part of the gene cluster that mediates the biosynthesis of agnestins, dihydroxy-xanthone metabolites. The pathway begins with the assembly and cyclization of atrochrysone thioester by the non-reducing polyketide synthase Agnpks1. The atrochrysone carboxyl ACP thioesterase AgnL7 then breaks the thioester bond and releases the atrochrysone carboxylic acid as the first enzyme-free intermediate. The decarboxylase AgnL1 then catalyzes the concerted decarboxylation-elimination required to convert atochrysone carboxylic acid into emodin anthrone, which is further oxidized to emodin by the anthrone oxygenase AgnL2. Emodin then undergoes reduction catalyzed by the oxidoreductase AgnL4 to yield the dihydroquinone tautomer which is the substrate for reduction by the short chain dehydrogenase AgnL6 reduction to produce hydroxyketone, followed by AgnL8 dehydration and likely spontaneous autoxidation to chrysophanol. Baeyer-Villiger oxidation by the oxidase AgnL3 leads to monodictyphenone via cleavage of the C-10/C-10a bond of chrysophanol. Alternative cleavage at the C-4a/C-10 bond of chrysophanol also leads to the formation some cephalone F. Further conversion to agnestins A and B, requires reduction to dihydro-monodictyphenone, oxidation to agnestin C probably via an epoxide, and rearrangement to either agnestin A or agnestin B directly, although agnestin A or agnestin B can also interconvert. Within the cluster, AgnR1 is the only unassigned oxidoreductase present which could be involved in this conversion. However, AgnR1 seems not to be involved in this step, and thus genes involved in the proposed oxidation/reduction may be located elsewhere on the genome. Further agnestin A derivatives are probably formed by spontaneous decarboxylations, dehydrations and methanolysis reactions. This is Monooxygenase AgnR1 from Paecilomyces divaricatus (Penicillium divaricatum).